The chain runs to 173 residues: Dual-action ribosomal maturation protein DarP (173 aa).

This sequence belongs to the DarP family.

The protein localises to the cytoplasm. Functionally, member of a network of 50S ribosomal subunit biogenesis factors which assembles along the 30S-50S interface, preventing incorrect 23S rRNA structures from forming. Promotes peptidyl transferase center (PTC) maturation. The protein is Dual-action ribosomal maturation protein DarP of Pseudomonas putida (strain W619).